A 158-amino-acid polypeptide reads, in one-letter code: Ribosome-binding factor A (158 aa).

The disordered stretch occupies residues 114–158 (AKDAEVRQVSTGAQYAGDADPYRKPEDEDEETDGSSEKNEGPASA). Residues 148 to 158 (SSEKNEGPASA) are compositionally biased toward basic and acidic residues.

Belongs to the RbfA family. In terms of assembly, monomer. Binds 30S ribosomal subunits, but not 50S ribosomal subunits or 70S ribosomes.

Its subcellular location is the cytoplasm. One of several proteins that assist in the late maturation steps of the functional core of the 30S ribosomal subunit. Associates with free 30S ribosomal subunits (but not with 30S subunits that are part of 70S ribosomes or polysomes). Required for efficient processing of 16S rRNA. May interact with the 5'-terminal helix region of 16S rRNA. The chain is Ribosome-binding factor A from Streptomyces griseus subsp. griseus (strain JCM 4626 / CBS 651.72 / NBRC 13350 / KCC S-0626 / ISP 5235).